Consider the following 299-residue polypeptide: ATP phosphoribosyltransferase (299 aa).

It belongs to the ATP phosphoribosyltransferase family. Long subfamily. As to quaternary structure, equilibrium between an active dimeric form, an inactive hexameric form and higher aggregates. Interconversion between the various forms is largely reversible and is influenced by the natural substrates and inhibitors of the enzyme. Requires Mg(2+) as cofactor.

It is found in the cytoplasm. It carries out the reaction 1-(5-phospho-beta-D-ribosyl)-ATP + diphosphate = 5-phospho-alpha-D-ribose 1-diphosphate + ATP. The protein operates within amino-acid biosynthesis; L-histidine biosynthesis; L-histidine from 5-phospho-alpha-D-ribose 1-diphosphate: step 1/9. With respect to regulation, feedback inhibited by histidine. Catalyzes the condensation of ATP and 5-phosphoribose 1-diphosphate to form N'-(5'-phosphoribosyl)-ATP (PR-ATP). Has a crucial role in the pathway because the rate of histidine biosynthesis seems to be controlled primarily by regulation of HisG enzymatic activity. This is ATP phosphoribosyltransferase from Salmonella choleraesuis (strain SC-B67).